Here is a 257-residue protein sequence, read N- to C-terminus: ABC transporter ATP-binding protein YxdL (257 aa).

Residues 5–243 enclose the ABC transporter domain; that stretch reads LEVKHINKTY…FYEQILDVLS (239 aa). An ATP-binding site is contributed by 40-47; sequence GPSGSGKT.

It belongs to the ABC transporter superfamily. As to quaternary structure, the complex is composed of two ATP-binding proteins (YxdL) and two transmembrane proteins (YxdM).

Part of the ABC transporter complex YxdLM which could be involved in peptide resistance. Responsible for energy coupling to the transport system. The protein is ABC transporter ATP-binding protein YxdL (yxdL) of Bacillus subtilis (strain 168).